The primary structure comprises 379 residues: L-demethylnoviosyl transferase (379 aa).

Belongs to the glycosyltransferase 28 family.

The enzyme catalyses dTDP-4-O-demethyl-beta-L-noviose + novobiocic acid = desmethyldescarbamoylnovobiocin + dTDP + H(+). It participates in antibiotic biosynthesis; novobiocin biosynthesis. Its activity is regulated as follows. Inhibited by TDP-L-rhamnose, the sugar donor that most closely structurally resembles the natural substrate dTDP-beta-L-noviose. Its function is as follows. Catalyzes the transfer of L-noviose from dTDP-4-O-demethyl-beta-L-noviose to the phenolic oxygen of novobiocic acid, creating the full ABC ring system in the novobiocin biosynthesis pathway. Novobiocin is an aminocoumarin family antibiotic that targets bacterial DNA gyrases. Also shows activity with variant coumarin aglycones, suggesting it may be a promiscuous catalyst for noviosylation of a range of planar scaffolds. Does not show activity with TDP-L-rhamnose. The polypeptide is L-demethylnoviosyl transferase (novM) (Streptomyces niveus (Streptomyces spheroides)).